A 506-amino-acid chain; its full sequence is Maturase K (506 aa).

The protein belongs to the intron maturase 2 family. MatK subfamily.

The protein localises to the plastid. It is found in the chloroplast. Usually encoded in the trnK tRNA gene intron. Probably assists in splicing its own and other chloroplast group II introns. In Hydrangea macrophylla (Bigleaf hydrangea), this protein is Maturase K.